Here is an 837-residue protein sequence, read N- to C-terminus: Neural cell adhesion molecule 2 (837 aa).

The N-terminal stretch at 1-19 (MSLLLSFYLLGLLVSSGQA) is a signal peptide. The Extracellular portion of the chain corresponds to 20-697 (LLQVTISLSK…PNIIKDTLFN (678 aa)). 5 Ig-like C2-type domains span residues 21–108 (LQVT…ATVV), 113–202 (QKLT…RDII), 208–297 (PPAI…AFLQ), 302–396 (PHII…MYLD), and 401–491 (PKFI…YILA). 2 disulfide bridges follow: Cys42/Cys93 and Cys136/Cys186. Residues Asn177 and Asn219 are each glycosylated (N-linked (GlcNAc...) asparagine). A disulfide bridge connects residues Cys232 and Cys281. N-linked (GlcNAc...) asparagine glycosylation is present at Asn309. Cysteines 322 and 380 form a disulfide. Residues Asn406, Asn419, Asn445, Asn474, and Asn562 are each glycosylated (N-linked (GlcNAc...) asparagine). An intrachain disulfide couples Cys422 to Cys475. Fibronectin type-III domains lie at 498 to 591 (SPYG…TLPV) and 593 to 688 (EPSP…PPKP). The chain crosses the membrane as a helical span at residues 698 to 718 (GLGLGAVIGLGVAALLLILVV). The Cytoplasmic segment spans residues 719 to 837 (TDVSCFFIRQ…IQSKEDDSKA (119 aa)). Residues 764–785 (GSKEPIVEMRTEDERVTNHEDG) show a composition bias toward basic and acidic residues. The disordered stretch occupies residues 764 to 818 (GSKEPIVEMRTEDERVTNHEDGSPVNEPNETTPLTEPEKLPLKEEDGKEALNPET). Position 765 is a phosphoserine (Ser765). The residue at position 780 (Thr780) is a Phosphothreonine. Ser786 bears the Phosphoserine mark. A compositionally biased stretch (low complexity) spans 789 to 798 (NEPNETTPLT). Basic and acidic residues predominate over residues 799-814 (EPEKLPLKEEDGKEAL).

As to expression, expressed most strongly in adult and fetal brain.

The protein resides in the cell membrane. Its function is as follows. May play important roles in selective fasciculation and zone-to-zone projection of the primary olfactory axons. This chain is Neural cell adhesion molecule 2 (NCAM2), found in Homo sapiens (Human).